The sequence spans 195 residues: A-type ATP synthase subunit E (195 aa).

It belongs to the V-ATPase E subunit family. Has multiple subunits with at least A(3), B(3), C, D, E, F, H, I and proteolipid K(x).

The protein resides in the cell membrane. Functionally, component of the A-type ATP synthase that produces ATP from ADP in the presence of a proton gradient across the membrane. This Halobacterium salinarum (strain ATCC 29341 / DSM 671 / R1) protein is A-type ATP synthase subunit E.